The chain runs to 355 residues: UDP-N-acetylglucosamine--N-acetylmuramyl-(pentapeptide) pyrophosphoryl-undecaprenol N-acetylglucosamine transferase (355 aa).

UDP-N-acetyl-alpha-D-glucosamine-binding positions include 14 to 16 (TGG), asparagine 123, arginine 164, serine 190, and glutamine 284.

This sequence belongs to the glycosyltransferase 28 family. MurG subfamily.

Its subcellular location is the cell inner membrane. It catalyses the reaction di-trans,octa-cis-undecaprenyl diphospho-N-acetyl-alpha-D-muramoyl-L-alanyl-D-glutamyl-meso-2,6-diaminopimeloyl-D-alanyl-D-alanine + UDP-N-acetyl-alpha-D-glucosamine = di-trans,octa-cis-undecaprenyl diphospho-[N-acetyl-alpha-D-glucosaminyl-(1-&gt;4)]-N-acetyl-alpha-D-muramoyl-L-alanyl-D-glutamyl-meso-2,6-diaminopimeloyl-D-alanyl-D-alanine + UDP + H(+). Its pathway is cell wall biogenesis; peptidoglycan biosynthesis. Cell wall formation. Catalyzes the transfer of a GlcNAc subunit on undecaprenyl-pyrophosphoryl-MurNAc-pentapeptide (lipid intermediate I) to form undecaprenyl-pyrophosphoryl-MurNAc-(pentapeptide)GlcNAc (lipid intermediate II). The sequence is that of UDP-N-acetylglucosamine--N-acetylmuramyl-(pentapeptide) pyrophosphoryl-undecaprenol N-acetylglucosamine transferase from Synechocystis sp. (strain ATCC 27184 / PCC 6803 / Kazusa).